The following is a 361-amino-acid chain: Deoxyhypusine hydroxylase (361 aa).

HEAT-like PBS-type repeat units follow at residues 59–85 (LKHELAYVLGQLLNTRALPTLSRVLEN), 94–120 (VRHEAAEALGAIGAEESLPILRKYMQD), 183–211 (QRYRAMFALRDFGAGSKEAVEALADGFRD), and 216–242 (FRHEIAYIFGQLSSPYSIPSLLSRLRD). The Fe cation site is built by His-61, Glu-62, His-96, and Glu-97. Fe cation contacts are provided by His-218, Glu-219, His-251, and Glu-252.

The protein belongs to the deoxyhypusine hydroxylase family. The cofactor is Fe(2+).

Its subcellular location is the cytoplasm. It localises to the nucleus. The enzyme catalyses [eIF5A protein]-deoxyhypusine + AH2 + O2 = [eIF5A protein]-hypusine + A + H2O. It participates in protein modification; eIF5A hypusination. In terms of biological role, catalyzes the hydroxylation of the N(6)-(4-aminobutyl)-L-lysine intermediate to form hypusine, an essential post-translational modification only found in mature eIF-5A factor. This is Deoxyhypusine hydroxylase from Cryptococcus neoformans var. neoformans serotype D (strain JEC21 / ATCC MYA-565) (Filobasidiella neoformans).